We begin with the raw amino-acid sequence, 339 residues long: Protein LicA (339 aa).

9 repeat units span residues 4 to 7 (INQS), 8 to 11 (INQS), 12 to 15 (INQS), 16 to 19 (INQS), 20 to 23 (INQS), 24 to 27 (INQS), 28 to 31 (INQS), 32 to 35 (INQS), and 36 to 39 (INQS). Residues 4 to 39 (INQSINQSINQSINQSINQSINQSINQSINQSINQS) are 9 X 4 AA tandem repeats of I-N-Q-S.

This sequence belongs to the peptidase S49 family.

Its function is as follows. Mediates phase variation of the LOS 6A2 and 12D9 epitopes. Phase variation of H.influenza LOS epitopes expressed by LicA is determined by a translational switch. The polypeptide is Protein LicA (licA) (Haemophilus influenzae).